The following is a 327-amino-acid chain: Gibberellin 2-beta-dioxygenase 3 (327 aa).

One can recognise a Fe2OG dioxygenase domain in the interval 173 to 278 (GSDQVFRVNH…RVSFIYFGGP (106 aa)). Y183 is a binding site for 2-oxoglutarate. Fe cation contacts are provided by H202, D204, and H259. 2-oxoglutarate-binding residues include R269 and S271.

Belongs to the iron/ascorbate-dependent oxidoreductase family. GA2OX subfamily. The cofactor is L-ascorbate. Fe(2+) is required as a cofactor. Expressed in roots, shoot apex, leaf blades, leaf sheaths, stems and flowers.

It catalyses the reaction gibberellin A1 + 2-oxoglutarate + O2 = gibberellin A8 + succinate + CO2. Catalyzes the 2-beta-hydroxylation of several biologically active gibberellins, leading to the homeostatic regulation of their endogenous level. Catabolism of gibberellins (GAs) plays a central role in plant development. In vitro, converts GA1, GA20, and GA29 to the corresponding 2-beta-hydroxylated products GA8, GA29-catabolite, respectively. The sequence is that of Gibberellin 2-beta-dioxygenase 3 from Oryza sativa subsp. japonica (Rice).